Reading from the N-terminus, the 156-residue chain is Transcriptional repressor NrdR (156 aa).

A zinc finger lies at 3 to 34 (CPKCNSTHSRVVDSRHADEANAIRRRRECENC). Residues 49 to 139 (LIVVKKDGTR…VYKEFKDVDQ (91 aa)) enclose the ATP-cone domain.

Belongs to the NrdR family. Zn(2+) serves as cofactor.

Functionally, negatively regulates transcription of bacterial ribonucleotide reductase nrd genes and operons by binding to NrdR-boxes. This Staphylococcus epidermidis (strain ATCC 35984 / DSM 28319 / BCRC 17069 / CCUG 31568 / BM 3577 / RP62A) protein is Transcriptional repressor NrdR.